Here is a 188-residue protein sequence, read N- to C-terminus: ATP-dependent Clp protease proteolytic subunit 1 (188 aa).

The active-site Nucleophile is the serine 90. Histidine 115 is a catalytic residue.

It belongs to the peptidase S14 family. In terms of assembly, fourteen ClpP subunits assemble into 2 heptameric rings which stack back to back to give a disk-like structure with a central cavity, resembling the structure of eukaryotic proteasomes.

Its subcellular location is the cytoplasm. It catalyses the reaction Hydrolysis of proteins to small peptides in the presence of ATP and magnesium. alpha-casein is the usual test substrate. In the absence of ATP, only oligopeptides shorter than five residues are hydrolyzed (such as succinyl-Leu-Tyr-|-NHMec, and Leu-Tyr-Leu-|-Tyr-Trp, in which cleavage of the -Tyr-|-Leu- and -Tyr-|-Trp bonds also occurs).. Its function is as follows. Cleaves peptides in various proteins in a process that requires ATP hydrolysis. Has a chymotrypsin-like activity. Plays a major role in the degradation of misfolded proteins. This is ATP-dependent Clp protease proteolytic subunit 1 from Corynebacterium jeikeium (strain K411).